The sequence spans 305 residues: Protoheme IX farnesyltransferase (305 aa).

The next 9 membrane-spanning stretches (helical) occupy residues 31 to 51, 52 to 72, 96 to 118, 122 to 144, 151 to 171, 180 to 200, 225 to 245, 247 to 267, and 281 to 301; these read VMSLVIFTGFVGMWLAPYSVH, PFIAGIAVVCIALGAGSAGAI, VIESDEALSFGLITGFFAVFFMA, NLLASFLLLFTIFYYICIYTIWL, NIVIGGVSGALPPVIGYAAVS, ILFLIIFIWTPPHSWALALFC, ILIYSILLFIVSLMPFFIGMN, FIYLIISGILGVVFLYYAGSL, and FAYSIFYLFFIFLLLYSTNTI.

It belongs to the UbiA prenyltransferase family. Protoheme IX farnesyltransferase subfamily.

It is found in the cell inner membrane. It catalyses the reaction heme b + (2E,6E)-farnesyl diphosphate + H2O = Fe(II)-heme o + diphosphate. It participates in porphyrin-containing compound metabolism; heme O biosynthesis; heme O from protoheme: step 1/1. Functionally, converts heme B (protoheme IX) to heme O by substitution of the vinyl group on carbon 2 of heme B porphyrin ring with a hydroxyethyl farnesyl side group. This chain is Protoheme IX farnesyltransferase, found in Rickettsia peacockii (strain Rustic).